Here is a 592-residue protein sequence, read N- to C-terminus: Frizzled-9 (592 aa).

Positions 1–23 (MAVPPLLRGALLLWQLLATGGAA) are cleaved as a signal peptide. At 24 to 230 (LEIGRFDPER…EVFWSRRDKD (207 aa)) the chain is on the extracellular side. Residues 35–156 (RGPAPCQAME…NDPHALCMEA (122 aa)) form the FZ domain. Intrachain disulfides connect C40-C101, C48-C94, C85-C123, C112-C153, and C116-C140. A required for Wnt-activated receptor activity region spans residues 59 to 173 (PNLLGHTSQG…PTEPHKGLGM (115 aa)). Residues 231–251 (FALVWMAVWSALCFFSTAFTV) traverse the membrane as a helical segment. At 252–267 (FTFLLEPHRFQYPERP) the chain is on the cytoplasmic side. A helical membrane pass occupies residues 268–288 (IIFLSMCYNVYSLAFLIRAVA). Topologically, residues 289-314 (GAQSVACDQEAGALYVIQEGLENTGC) are extracellular. A helical transmembrane segment spans residues 315 to 335 (TLVFLLLYYFGMASSLWWVVL). The Cytoplasmic segment spans residues 336–356 (TLTWFLAAGKKWGHEAIEAHG). A helical membrane pass occupies residues 357 to 377 (SYFHMAAWGLPALKTIVVLTL). Topologically, residues 378–401 (RKVAGDELTGLCYVASMDPAALTG) are extracellular. The chain crosses the membrane as a helical span at residues 402 to 422 (FVLVPLSCYLVLGTSFLLTGF). The Cytoplasmic segment spans residues 423-448 (VALFHIRKIMKTGGTNTEKLEKLMVK). Residues 449–469 (IGVFSILYTVPATCVIVCYVY) traverse the membrane as a helical segment. Topologically, residues 470–509 (ERLNMDFWRLRATEQPCTAAAVPGGRRDCSLPGGSVPTVA) are extracellular. Residues 510–530 (VFMLKIFMSLVVGITSGVWVW) traverse the membrane as a helical segment. Over 531–592 (SSKTFQTWQS…DPSLENPTHL (62 aa)) the chain is Cytoplasmic. The short motif at 533-538 (KTFQTW) is the Lys-Thr-X-X-X-Trp motif, mediates interaction with the PDZ domain of Dvl family members element. Residues 555-592 (ACRTPGGYGRGTHCHYKAPTVVLHMTKTDPSLENPTHL) form a required for CTNNB1 accumulation and TCF transcription factor activity region.

It belongs to the G-protein coupled receptor Fz/Smo family. Post-translationally, ubiquitinated by ZNRF3, leading to its degradation by the proteasome.

The protein resides in the cell membrane. Its function is as follows. Receptor for WNT2 that is coupled to the beta-catenin canonical signaling pathway, which leads to the activation of disheveled proteins, inhibition of GSK-3 kinase, nuclear accumulation of beta-catenin and activation of Wnt target genes. Plays a role in neuromuscular junction (NMJ) assembly by negatively regulating the clustering of acetylcholine receptors (AChR) through the beta-catenin canonical signaling pathway. May play a role in neural progenitor cells (NPCs) viability through the beta-catenin canonical signaling pathway by negatively regulating cell cycle arrest leading to inhibition of neuron apoptotic process. During hippocampal development, regulates neuroblast proliferation and apoptotic cell death. Controls bone formation through non canonical Wnt signaling mediated via ISG15. Positively regulates bone regeneration through non canonical Wnt signaling. In Rattus norvegicus (Rat), this protein is Frizzled-9.